Consider the following 235-residue polypeptide: MSRYLTQLDDELCWFPDPEHALEEPNGLLAIGGDLSPARLLAAYHKGIFPWNEPHQPLLWWSPDPRGVIRPEQLHIGRTLRKFIRGTSFDISIDRAFNEVIAACAAPRRSASGTWISTPMIDAYRQLHRLGHAHSIEIWQEGQLQAGLYGLSLGRVFCGESMFSRIDNGAKLAMVALCQHFARHDGALIDCQMQNDFLATLGIEEWPRRQFLTTLAQLSRQPLAANCWQTGSILL.

It belongs to the L/F-transferase family.

Its subcellular location is the cytoplasm. It catalyses the reaction N-terminal L-lysyl-[protein] + L-leucyl-tRNA(Leu) = N-terminal L-leucyl-L-lysyl-[protein] + tRNA(Leu) + H(+). The catalysed reaction is N-terminal L-arginyl-[protein] + L-leucyl-tRNA(Leu) = N-terminal L-leucyl-L-arginyl-[protein] + tRNA(Leu) + H(+). The enzyme catalyses L-phenylalanyl-tRNA(Phe) + an N-terminal L-alpha-aminoacyl-[protein] = an N-terminal L-phenylalanyl-L-alpha-aminoacyl-[protein] + tRNA(Phe). Its function is as follows. Functions in the N-end rule pathway of protein degradation where it conjugates Leu, Phe and, less efficiently, Met from aminoacyl-tRNAs to the N-termini of proteins containing an N-terminal arginine or lysine. The sequence is that of Leucyl/phenylalanyl-tRNA--protein transferase from Aeromonas hydrophila subsp. hydrophila (strain ATCC 7966 / DSM 30187 / BCRC 13018 / CCUG 14551 / JCM 1027 / KCTC 2358 / NCIMB 9240 / NCTC 8049).